Consider the following 88-residue polypeptide: MAHKKGASSSRNGRDSAAQRLGVKRFGGQVVKAGEILVRQRGTHFHPGVNVGRGGDDTLFALAPGAVEFGAKRGRKTVNIVPVARPEA.

This sequence belongs to the bacterial ribosomal protein bL27 family.

This Mycolicibacterium smegmatis (strain ATCC 700084 / mc(2)155) (Mycobacterium smegmatis) protein is Large ribosomal subunit protein bL27.